Here is a 209-residue protein sequence, read N- to C-terminus: Uracil phosphoribosyltransferase (209 aa).

Residues R79, R104, and 131–139 (DPMLATGVS) contribute to the 5-phospho-alpha-D-ribose 1-diphosphate site. Residues I194 and 199–201 (GDA) contribute to the uracil site. D200 provides a ligand contact to 5-phospho-alpha-D-ribose 1-diphosphate.

It belongs to the UPRTase family. The cofactor is Mg(2+).

The enzyme catalyses UMP + diphosphate = 5-phospho-alpha-D-ribose 1-diphosphate + uracil. It participates in pyrimidine metabolism; UMP biosynthesis via salvage pathway; UMP from uracil: step 1/1. Its activity is regulated as follows. Allosterically activated by GTP. In terms of biological role, catalyzes the conversion of uracil and 5-phospho-alpha-D-ribose 1-diphosphate (PRPP) to UMP and diphosphate. The protein is Uracil phosphoribosyltransferase of Thermotoga neapolitana (strain ATCC 49049 / DSM 4359 / NBRC 107923 / NS-E).